The primary structure comprises 398 residues: 1-deoxy-D-xylulose 5-phosphate reductoisomerase (398 aa).

Residues Thr-11, Gly-12, Ser-13, Ile-14, Arg-38, Asn-39, and Asn-125 each coordinate NADPH. Residue Lys-126 coordinates 1-deoxy-D-xylulose 5-phosphate. Residue Glu-127 coordinates NADPH. Asp-151 lines the Mn(2+) pocket. Residues Ser-152, Glu-153, Ser-179, and His-202 each contribute to the 1-deoxy-D-xylulose 5-phosphate site. Glu-153 provides a ligand contact to Mn(2+). Residue Gly-208 participates in NADPH binding. Residues Ser-215, Asn-220, Lys-221, and Glu-224 each contribute to the 1-deoxy-D-xylulose 5-phosphate site. Glu-224 provides a ligand contact to Mn(2+).

It belongs to the DXR family. The cofactor is Mg(2+). Mn(2+) serves as cofactor.

The catalysed reaction is 2-C-methyl-D-erythritol 4-phosphate + NADP(+) = 1-deoxy-D-xylulose 5-phosphate + NADPH + H(+). It functions in the pathway isoprenoid biosynthesis; isopentenyl diphosphate biosynthesis via DXP pathway; isopentenyl diphosphate from 1-deoxy-D-xylulose 5-phosphate: step 1/6. In terms of biological role, catalyzes the NADPH-dependent rearrangement and reduction of 1-deoxy-D-xylulose-5-phosphate (DXP) to 2-C-methyl-D-erythritol 4-phosphate (MEP). This is 1-deoxy-D-xylulose 5-phosphate reductoisomerase from Burkholderia cenocepacia (strain HI2424).